The sequence spans 62 residues: MQKLLIILILFCILKFNVDVEGRTAFPCNQSKCQERCKKEIKKGKCILQFISVSASQSCRCY.

A signal peptide spans methionine 1–glycine 22. Disulfide bonds link cysteine 28–cysteine 46, cysteine 33–cysteine 59, and cysteine 37–cysteine 61.

It belongs to the short scorpion toxin superfamily. Potassium channel inhibitor family. Alpha-KTx 23 subfamily. As to expression, expressed by the venom gland.

It localises to the secreted. Functionally, may block potassium channels. The sequence is that of U10-hottentoxin-Hj2a from Hottentotta judaicus (Black scorpion).